Reading from the N-terminus, the 190-residue chain is Hypoxanthine/guanine phosphoribosyltransferase (190 aa).

This sequence belongs to the purine/pyrimidine phosphoribosyltransferase family. Archaeal HPRT subfamily. As to quaternary structure, homodimer.

It localises to the cytoplasm. The enzyme catalyses IMP + diphosphate = hypoxanthine + 5-phospho-alpha-D-ribose 1-diphosphate. It carries out the reaction GMP + diphosphate = guanine + 5-phospho-alpha-D-ribose 1-diphosphate. It functions in the pathway purine metabolism; IMP biosynthesis via salvage pathway; IMP from hypoxanthine: step 1/1. In terms of biological role, catalyzes a salvage reaction resulting in the formation of IMP that is energically less costly than de novo synthesis. The protein is Hypoxanthine/guanine phosphoribosyltransferase of Methanosarcina barkeri (strain Fusaro / DSM 804).